A 301-amino-acid chain; its full sequence is MYAPVESNEGFNFKPELPTSSAYYRLLKKLRRQVGHAIRDFNMIEDGDKVMVCVSGGKDSYTLLDILLQFKRIAPINFDIVAVNLDQKQPGFPEDVLPRYMEENNIPYYILEKDTYSITKRLTPEGKTYCAVCSRLRRGSLYGFAQEIGATKVALGHHRDDIIATFFLNLFHGGSLKAMPPKLLSSDKKNILIRPLAYVEEKDIIKYAELRKFPIIPCNLCGSQENLQRAMINEMLREWDKQYPKRLHSIFGALQNVSPSQLADRDLFDFEVLDSQRELDFKDPEELKKRLDVVNLSFAAE.

A PP-loop motif motif is present at residues 55 to 60 (SGGKDS). Residues Cys130, Cys133, and Cys221 each coordinate [4Fe-4S] cluster.

This sequence belongs to the TtcA family. As to quaternary structure, homodimer. It depends on Mg(2+) as a cofactor. [4Fe-4S] cluster is required as a cofactor.

Its subcellular location is the cytoplasm. It carries out the reaction cytidine(32) in tRNA + S-sulfanyl-L-cysteinyl-[cysteine desulfurase] + AH2 + ATP = 2-thiocytidine(32) in tRNA + L-cysteinyl-[cysteine desulfurase] + A + AMP + diphosphate + H(+). It participates in tRNA modification. Functionally, catalyzes the ATP-dependent 2-thiolation of cytidine in position 32 of tRNA, to form 2-thiocytidine (s(2)C32). The sulfur atoms are provided by the cysteine/cysteine desulfurase (IscS) system. This is tRNA-cytidine(32) 2-sulfurtransferase from Acinetobacter baumannii (strain AB307-0294).